The following is a 316-amino-acid chain: 4-hydroxyphenylacetate decarboxylase activating enzyme (316 aa).

One can recognise a Radical SAM core domain in the interval His-20–Ala-307. [4Fe-4S] cluster-binding residues include Cys-34, Cys-38, Cys-41, Cys-60, Cys-66, Cys-69, and Cys-105. Residue Trp-40–Ala-42 coordinates S-adenosyl-L-methionine. One can recognise a 4Fe-4S ferredoxin-type domain in the interval Asn-84 to Lys-115. S-adenosyl-L-methionine-binding positions include Gly-144, Asp-193–Lys-195, and His-267.

Belongs to the organic radical-activating enzymes family. Monomer. The cofactor is [4Fe-4S] cluster.

The catalysed reaction is glycyl-[protein] + reduced [flavodoxin] + S-adenosyl-L-methionine = glycin-2-yl radical-[protein] + semiquinone [flavodoxin] + 5'-deoxyadenosine + L-methionine + H(+). In terms of biological role, catalyzes activation of 4-hydroxyphenylacetate decarboxylase under anaerobic conditions by generation of an organic free radical on a glycine residue, via a homolytic cleavage of S-adenosyl-L-methionine (SAM). In Clostridioides difficile (strain CD196) (Peptoclostridium difficile), this protein is 4-hydroxyphenylacetate decarboxylase activating enzyme.